A 480-amino-acid chain; its full sequence is Cobyric acid synthase (480 aa).

In terms of domain architecture, GATase cobBQ-type spans 246–434 (KILIAVPILP…VHGLFSELAQ (189 aa)). The active-site Nucleophile is the Cys-328. His-426 is a catalytic residue.

Belongs to the CobB/CobQ family. CobQ subfamily.

It participates in cofactor biosynthesis; adenosylcobalamin biosynthesis. Its function is as follows. Catalyzes amidations at positions B, D, E, and G on adenosylcobyrinic A,C-diamide. NH(2) groups are provided by glutamine, and one molecule of ATP is hydrogenolyzed for each amidation. This is Cobyric acid synthase from Methylocella silvestris (strain DSM 15510 / CIP 108128 / LMG 27833 / NCIMB 13906 / BL2).